Here is a 480-residue protein sequence, read N- to C-terminus: MMWTALLLVGLSILVIVLYGRRTRRRNEPPLDKGMIPWLGHALEFGKDAAKFLTRMKEKHGDIFTVRAAGLYITVLLDSNCYDAVLSDVASLDQTSYAQVLMKRIFNMILPSHNPESEKKRAEMHFQGASLTQLSNSMQNNLRLLMTPSEMGLKTSEWKKDGLFNLCYSLLFKTGYLTVFGAENNDSAALTQIYEEFRRFDKLLPKLARTTINKEEKQIASAAREKLWKWLTPSGLDRKPREQSWLGSYVKQLQDEGIDAEMQRRAMLLQLWVTQGNAGPAAFWVMGYLLTHPEALRAVREEIQGGKHLRLEERQKNTPVFDSVLWETLRLTAAALITRDVTQDKKIRLSNGQEYHLRRGDRLCVFPFISPQMDPQIHQQPEMFQFDRFLNADRTEKKDFFKNGARVKYPSVPWGTEDNLCPGRHFAVHAIKELVFTILTRFDVELCDKNATVPLVDPSRYGFGILQPAGDLEIRYRIRF.

A helical transmembrane segment spans residues 1 to 21 (MMWTALLLVGLSILVIVLYGR). Substrate is bound by residues Arg104, Leu110, Asn277, 338-339 (TR), and Arg362. Residue Cys421 coordinates heme.

The protein belongs to the cytochrome P450 family. It depends on heme as a cofactor.

Its subcellular location is the endoplasmic reticulum membrane. It catalyses the reaction prostaglandin H2 = prostaglandin I2. The enzyme catalyses a hydroperoxyeicosatetraenoate = an oxoeicosatetraenoate + H2O. The catalysed reaction is (15S)-hydroperoxy-(5Z,8Z,11Z,13E)-eicosatetraenoate = 15-oxo-(5Z,8Z,11Z,13E)-eicosatetraenoate + H2O. It carries out the reaction (15S)-hydroperoxy-(5Z,8Z,11Z,13E)-eicosatetraenoate + AH2 = (15S)-hydroxy-(5Z,8Z,11Z,13E)-eicosatetraenoate + A + H2O. Catalyzes the isomerization of prostaglandin H2 to prostacyclin (= prostaglandin I2). Functionally, catalyzes the biosynthesis and metabolism of eicosanoids. Catalyzes the isomerization of prostaglandin H2 to prostacyclin (= prostaglandin I2), a potent mediator of vasodilation and inhibitor of platelet aggregation. Additionally, displays dehydratase activity, toward hydroperoxyeicosatetraenoates (HPETEs), especially toward (15S)-hydroperoxy-(5Z,8Z,11Z,13E)-eicosatetraenoate (15(S)-HPETE). The protein is Prostacyclin synthase of Danio rerio (Zebrafish).